The primary structure comprises 314 residues: D-alanine--D-alanine ligase (314 aa).

In terms of domain architecture, ATP-grasp spans 112-307 (KQVWQSLGLP…FQQLVLSILD (196 aa)). 138-193 (AQMLGFPLIVKPAHEGSSIGMAKVGDVAELIAAWRAASAYDAQVLVEQWIQGPEFT) lines the ATP pocket. Mg(2+) contacts are provided by D261, E274, and N276.

This sequence belongs to the D-alanine--D-alanine ligase family. The cofactor is Mg(2+). Mn(2+) serves as cofactor.

It is found in the cytoplasm. It catalyses the reaction 2 D-alanine + ATP = D-alanyl-D-alanine + ADP + phosphate + H(+). It participates in cell wall biogenesis; peptidoglycan biosynthesis. Cell wall formation. In Stutzerimonas stutzeri (strain A1501) (Pseudomonas stutzeri), this protein is D-alanine--D-alanine ligase.